We begin with the raw amino-acid sequence, 358 residues long: Peptide chain release factor 1 (358 aa).

N5-methylglutamine is present on Q234. The interval 283–306 is disordered; it reads ERLHSERAGQRKSMVGSGDRSERI.

Belongs to the prokaryotic/mitochondrial release factor family. Post-translationally, methylated by PrmC. Methylation increases the termination efficiency of RF1.

The protein resides in the cytoplasm. Peptide chain release factor 1 directs the termination of translation in response to the peptide chain termination codons UAG and UAA. In Zymomonas mobilis subsp. mobilis (strain ATCC 31821 / ZM4 / CP4), this protein is Peptide chain release factor 1.